Consider the following 100-residue polypeptide: Large ribosomal subunit protein bL21 (100 aa).

The protein belongs to the bacterial ribosomal protein bL21 family. As to quaternary structure, part of the 50S ribosomal subunit. Contacts protein L20.

This protein binds to 23S rRNA in the presence of protein L20. The sequence is that of Large ribosomal subunit protein bL21 from Corynebacterium urealyticum (strain ATCC 43042 / DSM 7109).